The primary structure comprises 423 residues: D-threonate kinase (423 aa).

Substrate is bound by residues Asp-9, Arg-51, and 81–84 (KIDS). ATP contacts are provided by residues Ser-245, 355 to 358 (GGDI), and Gly-401.

The protein belongs to the four-carbon acid sugar kinase family.

The catalysed reaction is D-threonate + ATP = 4-O-phospho-D-threonate + ADP + H(+). In terms of biological role, catalyzes the ATP-dependent phosphorylation of D-threonate to D-threonate 4-phosphate. Can also phosphorylate 4-hydroxy-L-threonine, with lower efficiency. This side reaction may serve to deal with the toxicity of 4-hydroxy-L-threonine by converting it into 4-hydroxy-L-threonine 4-phosphate, a useful product that can be used by PdxA2. This chain is D-threonate kinase, found in Salmonella typhimurium (strain LT2 / SGSC1412 / ATCC 700720).